The sequence spans 405 residues: Imidazolonepropionase (405 aa).

Fe(3+) is bound by residues H72 and H74. Zn(2+) is bound by residues H72 and H74. 4-imidazolone-5-propanoate-binding residues include R81, Y144, and H177. Y144 is an N-formimidoyl-L-glutamate binding site. H242 serves as a coordination point for Fe(3+). H242 is a binding site for Zn(2+). Q245 lines the 4-imidazolone-5-propanoate pocket. D317 contacts Fe(3+). Residue D317 participates in Zn(2+) binding. The N-formimidoyl-L-glutamate site is built by N319 and G321. T322 lines the 4-imidazolone-5-propanoate pocket.

This sequence belongs to the metallo-dependent hydrolases superfamily. HutI family. Zn(2+) serves as cofactor. Fe(3+) is required as a cofactor.

It localises to the cytoplasm. It catalyses the reaction 4-imidazolone-5-propanoate + H2O = N-formimidoyl-L-glutamate. It functions in the pathway amino-acid degradation; L-histidine degradation into L-glutamate; N-formimidoyl-L-glutamate from L-histidine: step 3/3. Catalyzes the hydrolytic cleavage of the carbon-nitrogen bond in imidazolone-5-propanoate to yield N-formimidoyl-L-glutamate. It is the third step in the universal histidine degradation pathway. The polypeptide is Imidazolonepropionase (Klebsiella pneumoniae subsp. pneumoniae (strain ATCC 700721 / MGH 78578)).